The sequence spans 312 residues: MNFQSVISLLHHFWGTRGCLIAQPYDIEKGAGTKNPQTFLRALGPEPWAVAYVEPCRRPTDGRYGENPNRFQHYYQYQVLIKPSPDNIQEIYLDSLRALGIRPEDHDIRFVEDNWEDATVGAWGTGWEVWLDGMEITQFTYFQQCGGIDCRPVSIEITYGLERLTMYLQQVEAITKIHWTDNITYGDVFLQNEIEQSTYNFEASNPELLLTLFSLYEQEATQLTKKGLVLPSLDYVMKCSHTFNLLDARGVISVTERTRYIARIRHLARKVAHLYVEQREKLGFPLLKDLKPAIPVGQVEVAATQTKSASAG.

The protein belongs to the class-II aminoacyl-tRNA synthetase family. Tetramer of two alpha and two beta subunits.

It is found in the cytoplasm. It catalyses the reaction tRNA(Gly) + glycine + ATP = glycyl-tRNA(Gly) + AMP + diphosphate. The protein is Glycine--tRNA ligase alpha subunit of Nostoc punctiforme (strain ATCC 29133 / PCC 73102).